The chain runs to 166 residues: Small ribosomal subunit protein uS5 (166 aa).

Residues 11–74 form the S5 DRBM domain; that stretch reads LQEKLIAVNR…EKARRNMKTV (64 aa).

It belongs to the universal ribosomal protein uS5 family. Part of the 30S ribosomal subunit. Contacts proteins S4 and S8.

Functionally, with S4 and S12 plays an important role in translational accuracy. In terms of biological role, located at the back of the 30S subunit body where it stabilizes the conformation of the head with respect to the body. The protein is Small ribosomal subunit protein uS5 of Photorhabdus laumondii subsp. laumondii (strain DSM 15139 / CIP 105565 / TT01) (Photorhabdus luminescens subsp. laumondii).